The chain runs to 147 residues: Lysozyme C-3 (147 aa).

A signal peptide spans 1 to 18; it reads MKALVILGLLFLSVAVQG. The region spanning 19–147 is the C-type lysozyme domain; the sequence is KVFERCELAR…VSSYVEGCKL (129 aa). Intrachain disulfides connect Cys24/Cys145, Cys48/Cys133, Cys83/Cys99, and Cys95/Cys113. Active-site residues include Glu53 and Asp71.

It belongs to the glycosyl hydrolase 22 family. Monomer. As to expression, expressed in stomach.

Its subcellular location is the secreted. The catalysed reaction is Hydrolysis of (1-&gt;4)-beta-linkages between N-acetylmuramic acid and N-acetyl-D-glucosamine residues in a peptidoglycan and between N-acetyl-D-glucosamine residues in chitodextrins.. Functionally, lysozymes have primarily a bacteriolytic function; those in tissues and body fluids are associated with the monocyte-macrophage system and enhance the activity of immunoagents. This is Lysozyme C-3 from Ovis aries (Sheep).